The following is a 689-amino-acid chain: Elongation factor G (689 aa).

A tr-type G domain is found at 9–283 (AKFRNIGIMA…AIIEFMPSPL (275 aa)). GTP is bound by residues 18–25 (AHIDAGKT), 82–86 (DTPGH), and 136–139 (NKMD).

Belongs to the TRAFAC class translation factor GTPase superfamily. Classic translation factor GTPase family. EF-G/EF-2 subfamily.

Its subcellular location is the cytoplasm. In terms of biological role, catalyzes the GTP-dependent ribosomal translocation step during translation elongation. During this step, the ribosome changes from the pre-translocational (PRE) to the post-translocational (POST) state as the newly formed A-site-bound peptidyl-tRNA and P-site-bound deacylated tRNA move to the P and E sites, respectively. Catalyzes the coordinated movement of the two tRNA molecules, the mRNA and conformational changes in the ribosome. The polypeptide is Elongation factor G (Clostridium botulinum (strain Okra / Type B1)).